A 449-amino-acid chain; its full sequence is L-lysine-epsilon aminotransferase (449 aa).

Pyridoxal 5'-phosphate-binding residues include Gly-128 and Ala-129. 2-oxoglutarate is bound by residues Arg-170 and Gln-274. Residue Arg-170 participates in L-lysine binding. Pyridoxal 5'-phosphate is bound at residue Gln-274. An N6-(pyridoxal phosphate)lysine modification is found at Lys-300. 2-oxoglutarate is bound at residue Arg-422.

This sequence belongs to the class-III pyridoxal-phosphate-dependent aminotransferase family. The cofactor is pyridoxal 5'-phosphate.

The catalysed reaction is L-lysine + 2-oxoglutarate = (S)-2-amino-6-oxohexanoate + L-glutamate. Its function is as follows. Catalyzes the transfer of the terminal amino group of L-lysine to alpha-ketoglutarate to yield L-glutamate and 2-aminoadipate 6-semialdehyde ((S)-2-amino-6-oxohexanoate), which is spontaneously converted to the dehydrated form 1-piperideine 6-carboxylate. The chain is L-lysine-epsilon aminotransferase from Mycobacterium bovis (strain ATCC BAA-935 / AF2122/97).